Reading from the N-terminus, the 585-residue chain is MDRIFARFFCFLLIAAVSHAADLSPEQYWRSILPNTPMPSSISQLLNYPYLPAVRLPRRTDAGQRNYKSSVSHVAERSHRVDDGQRNYKLSALPATNELPHRTDAGQRNYKSSVSPVAELPHRVDDGQRNYKLSALPATNELPHRTDAGQRNYKSSVSPMAELSHRVDDGQRNYKLSALPATNELPHHTDAGQRNYKSSVSPVAELPHRVDDGQRNYKLSALPATNELPHRTDAGQRNYKSSVSPVAELPHRVDDGQRNYKLSALPATNELPHRIDAGQRNYKSSVSPMAELPHRADDGQRNYKLSVSPAAELPHRVDDGQRNYKLSVLPATELVHYTDGQRNYKSSVLETPELLKDPDMALFFLEKNLQQGKKINNALHFANLLATTNSKFLPRGKADSIPFSSKELPEILDRFGVRPGSDDAAEMSATLQDCELPANKGEKKACATSLESIVDFVTSSFGASDVDAASTVVLSKAVESSSLAQDYTVSGVRRMAGTGQLIACHPESYPYAVFMCHLTEATTRAYKASLVGKDGTAVEAVAVCHTDTSDWNPEHAAFHVLGVKPGTVPVCHFMQPDAVVWTRRG.

Residues 1–20 (MDRIFARFFCFLLIAAVSHA) form the signal peptide. Residues 63–82 (GQRNYKSSVSHVAERSHRVD) are disordered. One can recognise a BURP domain in the interval 363–584 (FFLEKNLQQG…QPDAVVWTRR (222 aa)).

Expressed in leaves.

This Oryza sativa subsp. japonica (Rice) protein is BURP domain-containing protein 17 (BURP17).